A 969-amino-acid polypeptide reads, in one-letter code: Leucine--tRNA ligase (969 aa).

The short motif at 78-89 is the 'HIGH' region element; sequence PYPSGEGLHVGH. The 'KMSKS' region signature appears at 739-743; that stretch reads KIGKS. Lys-742 serves as a coordination point for ATP.

It belongs to the class-I aminoacyl-tRNA synthetase family.

The protein localises to the cytoplasm. It carries out the reaction tRNA(Leu) + L-leucine + ATP = L-leucyl-tRNA(Leu) + AMP + diphosphate. The polypeptide is Leucine--tRNA ligase (Mycobacterium tuberculosis (strain ATCC 25177 / H37Ra)).